A 196-amino-acid chain; its full sequence is dITP/XTP pyrophosphatase (196 aa).

8 to 13 (TKNEGK) contributes to the substrate binding site. Residues Glu41 and Asp70 each contribute to the Mg(2+) site. The active-site Proton acceptor is the Asp70. Substrate-binding positions include Ser71, 153 to 156 (FGYD), Lys176, and 181 to 182 (HR).

It belongs to the HAM1 NTPase family. As to quaternary structure, homodimer. Mg(2+) is required as a cofactor.

It catalyses the reaction XTP + H2O = XMP + diphosphate + H(+). The enzyme catalyses dITP + H2O = dIMP + diphosphate + H(+). It carries out the reaction ITP + H2O = IMP + diphosphate + H(+). Functionally, pyrophosphatase that catalyzes the hydrolysis of nucleoside triphosphates to their monophosphate derivatives, with a high preference for the non-canonical purine nucleotides XTP (xanthosine triphosphate), dITP (deoxyinosine triphosphate) and ITP. Seems to function as a house-cleaning enzyme that removes non-canonical purine nucleotides from the nucleotide pool, thus preventing their incorporation into DNA/RNA and avoiding chromosomal lesions. The sequence is that of dITP/XTP pyrophosphatase from Bacillus licheniformis (strain ATCC 14580 / DSM 13 / JCM 2505 / CCUG 7422 / NBRC 12200 / NCIMB 9375 / NCTC 10341 / NRRL NRS-1264 / Gibson 46).